The chain runs to 227 residues: 7-cyano-7-deazaguanine synthase (227 aa).

An ATP-binding site is contributed by 8–18 (FSGGQDSTTCL). 4 residues coordinate Zn(2+): Cys-187, Cys-196, Cys-199, and Cys-202.

The protein belongs to the QueC family. The cofactor is Zn(2+).

It catalyses the reaction 7-carboxy-7-deazaguanine + NH4(+) + ATP = 7-cyano-7-deazaguanine + ADP + phosphate + H2O + H(+). It participates in purine metabolism; 7-cyano-7-deazaguanine biosynthesis. In terms of biological role, catalyzes the ATP-dependent conversion of 7-carboxy-7-deazaguanine (CDG) to 7-cyano-7-deazaguanine (preQ(0)). In Aliivibrio fischeri (strain MJ11) (Vibrio fischeri), this protein is 7-cyano-7-deazaguanine synthase.